The following is a 126-amino-acid chain: DNA-directed RNA polymerase subunit omega (126 aa).

It belongs to the RNA polymerase subunit omega family. The RNAP catalytic core consists of 2 alpha, 1 beta, 1 beta' and 1 omega subunit. When a sigma factor is associated with the core the holoenzyme is formed, which can initiate transcription.

It catalyses the reaction RNA(n) + a ribonucleoside 5'-triphosphate = RNA(n+1) + diphosphate. In terms of biological role, promotes RNA polymerase assembly. Latches the N- and C-terminal regions of the beta' subunit thereby facilitating its interaction with the beta and alpha subunits. This is DNA-directed RNA polymerase subunit omega from Rickettsia bellii (strain OSU 85-389).